We begin with the raw amino-acid sequence, 65 residues long: Large ribosomal subunit protein bL28 (65 aa).

Residues Met1–Lys26 form a disordered region. The span at Lys17–Lys26 shows a compositional bias: basic residues.

Belongs to the bacterial ribosomal protein bL28 family.

The sequence is that of Large ribosomal subunit protein bL28 from Mycoplasma mobile (strain ATCC 43663 / 163K / NCTC 11711) (Mesomycoplasma mobile).